The sequence spans 217 residues: UPF0319 protein VS_II0881 (217 aa).

Positions Met-1 to Ala-21 are cleaved as a signal peptide.

Belongs to the UPF0319 family.

This Vibrio atlanticus (strain LGP32) (Vibrio splendidus (strain Mel32)) protein is UPF0319 protein VS_II0881.